The chain runs to 200 residues: Imidazoleglycerol-phosphate dehydratase (200 aa).

The protein belongs to the imidazoleglycerol-phosphate dehydratase family.

It is found in the cytoplasm. It carries out the reaction D-erythro-1-(imidazol-4-yl)glycerol 3-phosphate = 3-(imidazol-4-yl)-2-oxopropyl phosphate + H2O. It participates in amino-acid biosynthesis; L-histidine biosynthesis; L-histidine from 5-phospho-alpha-D-ribose 1-diphosphate: step 6/9. This chain is Imidazoleglycerol-phosphate dehydratase, found in Chlorobium phaeovibrioides (strain DSM 265 / 1930) (Prosthecochloris vibrioformis (strain DSM 265)).